The chain runs to 318 residues: Ribose-phosphate pyrophosphokinase 2 (318 aa).

96–101 (RQDKKD) contributes to the ATP binding site. The Mg(2+) site is built by Asp128, His130, Asp139, and Asp143. His130 is an ATP binding site. Positions 212-227 (KDRVAILVDDMADTCG) are binding of phosphoribosylpyrophosphate.

The protein belongs to the ribose-phosphate pyrophosphokinase family. As to quaternary structure, homodimer. The active form is probably a hexamer composed of 3 homodimers. Mg(2+) serves as cofactor.

It catalyses the reaction D-ribose 5-phosphate + ATP = 5-phospho-alpha-D-ribose 1-diphosphate + AMP + H(+). Its pathway is metabolic intermediate biosynthesis; 5-phospho-alpha-D-ribose 1-diphosphate biosynthesis; 5-phospho-alpha-D-ribose 1-diphosphate from D-ribose 5-phosphate (route I): step 1/1. Its activity is regulated as follows. Activated by magnesium and inorganic phosphate. Competitively or non-competitively inhibited by ADP, 2,3-bisphosphoglyceride or GDP. Catalyzes the synthesis of phosphoribosylpyrophosphate (PRPP) that is essential for nucleotide synthesis. The polypeptide is Ribose-phosphate pyrophosphokinase 2 (prps2) (Xenopus tropicalis (Western clawed frog)).